A 1018-amino-acid chain; its full sequence is UPF0182 protein Tfu_0541 (1018 aa).

Transmembrane regions (helical) follow at residues 20–40, 64–84, 115–135, 171–191, 212–232, 254–274, and 287–307; these read LAPV…AANF, ALLF…SVYF, VFFW…ATAE, VIIG…VVVH, VHLS…YWLE, AVLY…VLFF, and VSLG…PAIV. Disordered stretches follow at residues 497–570 and 939–965; these read YPVD…QANN and GDEA…ASSD. Composition is skewed to acidic residues over residues 542-560 and 939-959; these read QDQE…EEEQ and GDEA…EEEQ.

This sequence belongs to the UPF0182 family.

The protein localises to the cell membrane. In Thermobifida fusca (strain YX), this protein is UPF0182 protein Tfu_0541.